Reading from the N-terminus, the 140-residue chain is Large-conductance mechanosensitive channel 3 (140 aa).

Helical transmembrane passes span 8 to 28, 30 to 50, and 81 to 101; these read FISKGNVMDLAVGVIIGAAFG, IVTSLVDDVIMPIFGAIFGGL, and GSFITAVLNFLILAFIIFLMV.

The protein belongs to the MscL family. In terms of assembly, homopentamer.

The protein localises to the cell inner membrane. Its function is as follows. Channel that opens in response to stretch forces in the membrane lipid bilayer. May participate in the regulation of osmotic pressure changes within the cell. The polypeptide is Large-conductance mechanosensitive channel 3 (Mesorhizobium japonicum (strain LMG 29417 / CECT 9101 / MAFF 303099) (Mesorhizobium loti (strain MAFF 303099))).